A 328-amino-acid polypeptide reads, in one-letter code: MHTLIERLEKVTNSKELEEARLNALGKKGVFADKFNQLKNLNGEEKNAFAKEIHHYKQAFEKAFEWKKKAILELELEERLKKEKIDVSLFNAIKTSSSHPLNYTKNKIIEFFTPLGYKLEIGSLVEDDFHNFSALNLPPYHPARDMQDTFYFKDHKLLRTHTSPVQIHTMQEQTPPIKMICLGETFRRDYDLTHTPMFHQIEGLVVDQKGNIRFTHLKGVIEDFLHYFFGGVQLRWRSSFFPFTEPSAEVDISCVFCKQEGCRVCSHTGWLEVLGCGMVNNAVFEAIGYENVSGFAFGMGIERLAMLTCQINDLRSFFETDLRVLESF.

Glu-245 is a Mg(2+) binding site.

This sequence belongs to the class-II aminoacyl-tRNA synthetase family. Phe-tRNA synthetase alpha subunit type 1 subfamily. Tetramer of two alpha and two beta subunits. Mg(2+) serves as cofactor.

The protein localises to the cytoplasm. It catalyses the reaction tRNA(Phe) + L-phenylalanine + ATP = L-phenylalanyl-tRNA(Phe) + AMP + diphosphate + H(+). This chain is Phenylalanine--tRNA ligase alpha subunit, found in Helicobacter pylori (strain HPAG1).